Consider the following 432-residue polypeptide: Vacuolar protein sorting-associated protein 38 (432 aa).

An N-linked (GlcNAc...) asparagine glycan is attached at Asn-20. Positions 216–287 (LDTYQENIKM…KEAIEKLQKK (72 aa)) form a coiled coil. Residues 348-365 (IINAMLGFYSLFIVIYSY) traverse the membrane as a helical segment.

Belongs to the VPS38 family. In terms of assembly, component of the VPS34 PI3-kinase complex II composed of VPS15, VPS30, VPS34 and VPS38.

It localises to the golgi apparatus. It is found in the trans-Golgi network membrane. The protein localises to the endosome membrane. Its function is as follows. Involved in endosome-to-Golgi retrograde transport as part of the VPS34 PI3-kinase complex II. This complex is required for the endosome-to-Golgi retrieval of PEP1 and KEX2, and the recruitment of VPS5 and VPS7, two components of the retromer complex, to endosomal membranes (probably through generating a specific pool of phosphatidylinositol 3-phosphate allowing the recruitment of the retromer complex proteins to the endosome). Mediates the interaction between VPS30 and the VPS34-VPS15 core complex, leading to the recruitment of VPS30 to the membrane. This is Vacuolar protein sorting-associated protein 38 from Candida glabrata (strain ATCC 2001 / BCRC 20586 / JCM 3761 / NBRC 0622 / NRRL Y-65 / CBS 138) (Yeast).